Consider the following 807-residue polypeptide: uncharacterized protein (807 aa).

A signal peptide spans 1 to 18 (MNTVLFVILLAAIGSNHG). Over 19-704 (LIDERLTVNR…GLFTDIFGGE (686 aa)) the chain is Extracellular. Over residues 133–142 (TTTTAAPQTG) the composition is skewed to polar residues. The tract at residues 133 to 171 (TTTTAAPQTGNRRRRRAAGDEPNTDDNTPPNLEIPDWLD) is disordered. N-linked (GlcNAc...) asparagine; by host glycans are attached at residues N277 and N660. The chain crosses the membrane as a helical span at residues 705 to 725 (VWAVIAAIFSPVFLTAFALII). The Cytoplasmic portion of the chain corresponds to 726 to 807 (SLINFIPAVR…GERQVISRTN (82 aa)).

The protein resides in the host membrane. This is an uncharacterized protein from Magallana gigas (Pacific oyster).